The chain runs to 154 residues: Nuclear cap-binding protein subunit 2 (154 aa).

MRNA is bound by residues Y10, Y33, 102-106, 113-117, and 123-124; these read RCDWD, RQYGR, and QV. One can recognise an RRM domain in the interval 30 to 108; sequence STLYMGNLSF…RIIRCDWDAG (79 aa).

Belongs to the RRM NCBP2 family. As to quaternary structure, component of the nuclear cap-binding complex (CBC), a heterodimer composed of Cbp80 and Cbp20 that interacts with m7GpppG-capped RNA.

It localises to the nucleus. Component of the cap-binding complex (CBC), which binds co-transcriptionally to the 5' cap of pre-mRNAs and is involved in various processes such as pre-mRNA splicing and RNA-mediated gene silencing (RNAi). The CBC complex is involved in miRNA-mediated RNA interference and is required for primary microRNAs (miRNAs) processing. Also involved in innate immunity via the short interfering RNAs (siRNAs) processing machinery by restricting the viral RNA production. In the CBC complex, Cbp20 recognizes and binds capped RNAs (m7GpppG-capped RNA) but requires Cbp80 to stabilize the movement of its N-terminal loop and lock the CBC into a high affinity cap-binding state with the cap structure. The protein is Nuclear cap-binding protein subunit 2 of Bombyx mori (Silk moth).